Consider the following 246-residue polypeptide: Pyridoxine 5'-phosphate synthase (246 aa).

N10 provides a ligand contact to 3-amino-2-oxopropyl phosphate. 12–13 (DH) contributes to the 1-deoxy-D-xylulose 5-phosphate binding site. R21 is a binding site for 3-amino-2-oxopropyl phosphate. Catalysis depends on H46, which acts as the Proton acceptor. 2 residues coordinate 1-deoxy-D-xylulose 5-phosphate: R48 and H53. E73 (proton acceptor) is an active-site residue. T103 contacts 1-deoxy-D-xylulose 5-phosphate. The Proton donor role is filled by H193. 3-amino-2-oxopropyl phosphate-binding positions include G194 and 215-216 (GH).

This sequence belongs to the PNP synthase family. In terms of assembly, homooctamer; tetramer of dimers.

The protein resides in the cytoplasm. The enzyme catalyses 3-amino-2-oxopropyl phosphate + 1-deoxy-D-xylulose 5-phosphate = pyridoxine 5'-phosphate + phosphate + 2 H2O + H(+). It functions in the pathway cofactor biosynthesis; pyridoxine 5'-phosphate biosynthesis; pyridoxine 5'-phosphate from D-erythrose 4-phosphate: step 5/5. Catalyzes the complicated ring closure reaction between the two acyclic compounds 1-deoxy-D-xylulose-5-phosphate (DXP) and 3-amino-2-oxopropyl phosphate (1-amino-acetone-3-phosphate or AAP) to form pyridoxine 5'-phosphate (PNP) and inorganic phosphate. This is Pyridoxine 5'-phosphate synthase from Rhodopirellula baltica (strain DSM 10527 / NCIMB 13988 / SH1).